Here is an 82-residue protein sequence, read N- to C-terminus: Large ribosomal subunit protein uL23 (82 aa).

Belongs to the universal ribosomal protein uL23 family. In terms of assembly, part of the 50S ribosomal subunit. Contacts protein L29.

Binds to 23S rRNA. One of the proteins that surrounds the polypeptide exit tunnel on the outside of the ribosome. The sequence is that of Large ribosomal subunit protein uL23 from Methanosarcina acetivorans (strain ATCC 35395 / DSM 2834 / JCM 12185 / C2A).